A 417-amino-acid polypeptide reads, in one-letter code: NADH-quinone oxidoreductase subunit D (417 aa).

This sequence belongs to the complex I 49 kDa subunit family. As to quaternary structure, NDH-1 is composed of 14 different subunits. Subunits NuoB, C, D, E, F, and G constitute the peripheral sector of the complex.

It localises to the cell inner membrane. It catalyses the reaction a quinone + NADH + 5 H(+)(in) = a quinol + NAD(+) + 4 H(+)(out). In terms of biological role, NDH-1 shuttles electrons from NADH, via FMN and iron-sulfur (Fe-S) centers, to quinones in the respiratory chain. The immediate electron acceptor for the enzyme in this species is believed to be ubiquinone. Couples the redox reaction to proton translocation (for every two electrons transferred, four hydrogen ions are translocated across the cytoplasmic membrane), and thus conserves the redox energy in a proton gradient. In Nitrosomonas eutropha (strain DSM 101675 / C91 / Nm57), this protein is NADH-quinone oxidoreductase subunit D.